Here is a 97-residue protein sequence, read N- to C-terminus: Mitochondrial import inner membrane translocase subunit Tim8 A (97 aa).

Residues 43-66 carry the Twin CX3C motif motif; that stretch reads CWEKCMDKPGPKLDSRAEACFVNC. 2 disulfides stabilise this stretch: Cys43-Cys66 and Cys47-Cys62. Residues Ser57, Ser87, Ser94, and Ser96 each carry the phosphoserine modification.

Belongs to the small Tim family. As to quaternary structure, heterohexamer; composed of 3 copies of TIMM8A and 3 copies of TIMM13, named soluble 70 kDa complex. Associates with the TIM22 complex, whose core is composed of TIMM22.

It localises to the mitochondrion inner membrane. Its function is as follows. Mitochondrial intermembrane chaperone that participates in the import and insertion of some multi-pass transmembrane proteins into the mitochondrial inner membrane. Also required for the transfer of beta-barrel precursors from the TOM complex to the sorting and assembly machinery (SAM complex) of the outer membrane. Acts as a chaperone-like protein that protects the hydrophobic precursors from aggregation and guide them through the mitochondrial intermembrane space. The TIMM8-TIMM13 complex mediates the import of proteins such as TIMM23, SLC25A12/ARALAR1 and SLC25A13/ARALAR2, while the predominant TIMM9-TIMM10 70 kDa complex mediates the import of much more proteins. The protein is Mitochondrial import inner membrane translocase subunit Tim8 A (TIMM8A) of Bos taurus (Bovine).